Here is a 744-residue protein sequence, read N- to C-terminus: Cytosolic neutral trehalase (744 aa).

Residues Asp-99, Asp-101, Asn-103, Gln-105, and Asp-110 each contribute to the Ca(2+) site. Substrate is bound by residues Arg-286, 293-294 (WD), Asn-330, 339-341 (RSQ), Glu-406, Arg-455, and Gly-458. Active-site proton donor/acceptor residues include Asp-460 and Glu-665.

This sequence belongs to the glycosyl hydrolase 37 family. Ca(2+) is required as a cofactor.

It is found in the cytoplasm. The enzyme catalyses alpha,alpha-trehalose + H2O = alpha-D-glucose + beta-D-glucose. It functions in the pathway carbohydrate degradation. In terms of biological role, hydrolyzes intracellular trehalose to glucose. The sequence is that of Cytosolic neutral trehalase from Neurospora crassa (strain ATCC 24698 / 74-OR23-1A / CBS 708.71 / DSM 1257 / FGSC 987).